A 516-amino-acid polypeptide reads, in one-letter code: Cysteine--tRNA ligase (516 aa).

Cysteine 34 contacts Zn(2+). Residues 36-46 carry the 'HIGH' region motif; sequence PTVYNFAHLGN. The Zn(2+) site is built by cysteine 225, histidine 250, and glutamate 254. Positions 285–289 match the 'KMSKS' region motif; the sequence is KMSKS. Residue lysine 288 coordinates ATP.

Belongs to the class-I aminoacyl-tRNA synthetase family. As to quaternary structure, monomer. Requires Zn(2+) as cofactor.

The protein localises to the cytoplasm. It catalyses the reaction tRNA(Cys) + L-cysteine + ATP = L-cysteinyl-tRNA(Cys) + AMP + diphosphate. The chain is Cysteine--tRNA ligase from Zymomonas mobilis subsp. mobilis (strain ATCC 31821 / ZM4 / CP4).